The chain runs to 444 residues: Protein kinase C and casein kinase substrate in neurons protein 1 (444 aa).

2 positions are modified to phosphoserine: serine 2 and serine 79. The F-BAR domain maps to 13–283 (EETTDSFWEV…AIRGADAQED (271 aa)). A coiled-coil region spans residues 26–275 (KRTVKRIDDG…HVYRELEQAI (250 aa)). 2 disordered regions span residues 173–194 (REMN…LQDK) and 309–386 (LPHT…DDSK). Threonine 184 carries the phosphothreonine modification. Residues 314–324 (TKKEKQPKKAE) show a composition bias toward basic and acidic residues. Residues 329-351 (TNATGAVESTSQAGDRGSVSSYD) show a composition bias toward polar residues. Serine 346, serine 348, serine 349, serine 361, and serine 365 each carry phosphoserine. The SH3 domain maps to 385 to 444 (SKGVRVRALYDYDGQEQDELSFKAGDELTKLGEEDEQGWCRGRLDSGQLGLYPANYVEAI). Tyrosine 394 carries the post-translational modification Phosphotyrosine. 2 positions are modified to phosphoserine: serine 405 and serine 430.

This sequence belongs to the PACSIN family. In terms of assembly, homodimer. May form heterooligomers with other PACSINs. Interacts with both COBL and DBNL. Identified in a complex composed of COBL, PACSIN1 and WASL. Interacts (via SH3 domain) with SYNJ1 and WASL. Interacts (via SH3 domain) with DNM1; the interaction is reduced by DNM1 phosphorylation. Interacts with DNM2 and DNM3. Interacts with MAPT. Interacts with EHD1 and EHD3. Interacts with TRPV4. Post-translationally, phosphorylated by casein kinase 2 (CK2) and protein kinase C (PKC).

It localises to the cytoplasm. The protein resides in the cell projection. It is found in the synapse. Its subcellular location is the synaptosome. The protein localises to the ruffle membrane. It localises to the membrane. The protein resides in the cytoplasmic vesicle membrane. It is found in the cytosol. Its subcellular location is the cell membrane. In terms of biological role, binds to membranes via its F-BAR domain and mediates membrane tubulation. Plays a role in the reorganization of the microtubule cytoskeleton via its interaction with MAPT; this decreases microtubule stability and inhibits MAPT-induced microtubule polymerization. Plays a role in cellular transport processes by recruiting DNM1, DNM2 and DNM3 to membranes. Plays a role in the reorganization of the actin cytoskeleton and in neuron morphogenesis via its interaction with COBL and WASL, and by recruiting COBL to the cell cortex. Plays a role in the regulation of neurite formation, neurite branching and the regulation of neurite length. Required for normal synaptic vesicle endocytosis; this process retrieves previously released neurotransmitters to accommodate multiple cycles of neurotransmission. Required for normal excitatory and inhibitory synaptic transmission. The protein is Protein kinase C and casein kinase substrate in neurons protein 1 (Pacsin1) of Pongo abelii (Sumatran orangutan).